A 435-amino-acid polypeptide reads, in one-letter code: Type A flavoprotein fprA (435 aa).

A zinc metallo-hydrolase region spans residues Ala-48 to Leu-228. Fe cation contacts are provided by His-98, Glu-100, Asp-102, His-167, Asp-186, and His-243. Residues Leu-276–Ala-415 form the Flavodoxin-like domain.

The protein in the N-terminal section; belongs to the zinc metallo-hydrolase group 3 family. In terms of assembly, homodimer. FMN is required as a cofactor. It depends on Fe cation as a cofactor.

Its function is as follows. Low-potential electron donor to a number of redox enzymes. The sequence is that of Type A flavoprotein fprA (fprA) from Rhodobacter capsulatus (Rhodopseudomonas capsulata).